Reading from the N-terminus, the 338-residue chain is MPQPSRPRKGSMGFSPRKRAESEVPRIRSWASNDGAPGVQGFAGYKAGMTQVLMVNDEANSPREGMEEAVPVTVVETPPMRAVALRAYEDTPYGSKPLTEVWGREFDTSLERTLDLPNEDTFEDDAAALRDDAETGDIDDVRLITHTLPAGMRNIPKKTPDVMETRVGGGTLTDRVEFGLDLISDGGEHEISDIFRAGEYLDAAGVTKGKGTQGPVKRFGVQKRKGKHARQGYRRRIGNLGPWNPSRVRSTVPQQGQTGYHQRTELNKRLIEIGNGDEPTVDGGFVGYGEVDGPYALIKGSLPGPDQRLLRFRTAVRPSDQPRLDPEVRYVSTASNQG.

The interval 1 to 37 (MPQPSRPRKGSMGFSPRKRAESEVPRIRSWASNDGAP) is disordered.

This sequence belongs to the universal ribosomal protein uL3 family. Part of the 50S ribosomal subunit. Forms a cluster with proteins L14 and L24e.

Its function is as follows. One of the primary rRNA binding proteins, it binds directly near the 3'-end of the 23S rRNA, where it nucleates assembly of the 50S subunit. The polypeptide is Large ribosomal subunit protein uL3 (Haloquadratum walsbyi (strain DSM 16790 / HBSQ001)).